We begin with the raw amino-acid sequence, 356 residues long: UDP-N-acetylglucosamine--N-acetylmuramyl-(pentapeptide) pyrophosphoryl-undecaprenol N-acetylglucosamine transferase (356 aa).

Residues 12 to 14 (TGG), Asn-124, Arg-163, Ser-188, Ile-242, 261 to 266 (ALTVCE), and Gln-287 contribute to the UDP-N-acetyl-alpha-D-glucosamine site.

This sequence belongs to the glycosyltransferase 28 family. MurG subfamily.

The protein localises to the cell inner membrane. The catalysed reaction is di-trans,octa-cis-undecaprenyl diphospho-N-acetyl-alpha-D-muramoyl-L-alanyl-D-glutamyl-meso-2,6-diaminopimeloyl-D-alanyl-D-alanine + UDP-N-acetyl-alpha-D-glucosamine = di-trans,octa-cis-undecaprenyl diphospho-[N-acetyl-alpha-D-glucosaminyl-(1-&gt;4)]-N-acetyl-alpha-D-muramoyl-L-alanyl-D-glutamyl-meso-2,6-diaminopimeloyl-D-alanyl-D-alanine + UDP + H(+). Its pathway is cell wall biogenesis; peptidoglycan biosynthesis. In terms of biological role, cell wall formation. Catalyzes the transfer of a GlcNAc subunit on undecaprenyl-pyrophosphoryl-MurNAc-pentapeptide (lipid intermediate I) to form undecaprenyl-pyrophosphoryl-MurNAc-(pentapeptide)GlcNAc (lipid intermediate II). The chain is UDP-N-acetylglucosamine--N-acetylmuramyl-(pentapeptide) pyrophosphoryl-undecaprenol N-acetylglucosamine transferase from Stutzerimonas stutzeri (strain A1501) (Pseudomonas stutzeri).